A 190-amino-acid chain; its full sequence is Elongation factor P (190 aa).

Belongs to the elongation factor P family.

The protein localises to the cytoplasm. The protein operates within protein biosynthesis; polypeptide chain elongation. Functionally, involved in peptide bond synthesis. Stimulates efficient translation and peptide-bond synthesis on native or reconstituted 70S ribosomes in vitro. Probably functions indirectly by altering the affinity of the ribosome for aminoacyl-tRNA, thus increasing their reactivity as acceptors for peptidyl transferase. The sequence is that of Elongation factor P from Pseudomonas fluorescens (strain ATCC BAA-477 / NRRL B-23932 / Pf-5).